A 399-amino-acid polypeptide reads, in one-letter code: C-type lectin domain family 4 member M (399 aa).

Residues 1 to 49 (MSDSKEQRVQPLGLLEEDPTTSGIRLFPRDFQFQQTHGHKSSTGCLGHG) are Cytoplasmic-facing. The Endocytosis signal signature appears at 14-15 (LL). A helical; Signal-anchor for type II membrane protein membrane pass occupies residues 50 to 70 (PLVLQLLSFTLLAGVLVAILV). The Extracellular segment spans residues 71–399 (QVYKVPSSLS…KKPTACFRDE (329 aa)). A glycan (N-linked (GlcNAc...) asparagine) is linked at asparagine 92. 7 consecutive repeat copies span residues 108-130 (KLQE…PEKS), 131-153 (TLQE…PEKS), 154-176 (RLQE…PEKS), 177-199 (KQQE…PEKS), 200-222 (KQQE…PEKS), 223-245 (KQQE…PDQS), and 246-268 (KQQQ…CCRC). Residues 108–269 (KLQEIYQELI…AFERLCCRCP (162 aa)) are 7 X approximate tandem repeats. Cystine bridges form between cysteine 265–cysteine 395, cysteine 268–cysteine 279, cysteine 296–cysteine 389, and cysteine 368–cysteine 381. One can recognise a C-type lectin domain in the interval 274-390 (FFQGNCYFIS…CNVDNYWICK (117 aa)). Ca(2+) is bound by residues glutamate 359, asparagine 361, serine 363, glutamate 366, asparagine 377, and aspartate 378. N-linked (GlcNAc...) asparagine glycosylation is present at asparagine 361.

Homotetramer.

Its subcellular location is the membrane. In terms of biological role, probable pathogen-recognition receptor involved in peripheral immune surveillance in liver. May mediate the endocytosis of pathogens which are subsequently degraded in lysosomal compartments. Probably recognizes in a calcium-dependent manner high mannose N-linked oligosaccharides in a variety of pathogen antigens. Is a receptor for ICAM3, probably by binding to mannose-like carbohydrates. This chain is C-type lectin domain family 4 member M (CLEC4M), found in Hylobates lar (Lar gibbon).